The chain runs to 345 residues: Proto-oncogene serine/threonine-protein kinase mos (345 aa).

A Protein kinase domain is found at 63–344 (VCLLQRLGAG…LDLRALQAEL (282 aa)). Residues 69–77 (LGAGGFGSV) and lysine 90 contribute to the ATP site. The active-site Proton acceptor is aspartate 202.

The protein belongs to the protein kinase superfamily. Ser/Thr protein kinase family. Interacts with MAP2K1/MEK1. In terms of tissue distribution, restricted to gonadal tissues.

The protein localises to the cytoplasm. The enzyme catalyses L-seryl-[protein] + ATP = O-phospho-L-seryl-[protein] + ADP + H(+). It carries out the reaction L-threonyl-[protein] + ATP = O-phospho-L-threonyl-[protein] + ADP + H(+). Serine/threonine kinase involved in the regulation of MAPK signaling. Is an activator of the ERK1/2 signaling cascade playing an essential role in the stimulation of oocyte maturation. This is Proto-oncogene serine/threonine-protein kinase mos from Sus scrofa (Pig).